A 485-amino-acid chain; its full sequence is Neuropeptide F receptor (485 aa).

The Extracellular portion of the chain corresponds to 1–91 (MIISMNQTEP…DSPWYHMLIS (91 aa)). The chain crosses the membrane as a helical span at residues 92–112 (MYGVLIVFGALGNTLVVIAVI). The Cytoplasmic segment spans residues 113 to 122 (RKPIMRTARN). The helical transmembrane segment at 123 to 143 (LFILNLAISDLLLCLVTMPLT) threads the bilayer. Over 144–163 (LMEILSKYWPYGSCSILCKT) the chain is Extracellular. An intrachain disulfide couples C161 to C248. The chain crosses the membrane as a helical span at residues 164 to 184 (IAMLQALCIFVSTISITAIAF). At 185–202 (DRYQVIVYPTRDSLQFVG) the chain is on the cytoplasmic side. A helical membrane pass occupies residues 203-223 (AVTILAGIWALALLLASPLFV). At 224–262 (YKELINTDTPALLQQIGLQDTIPYCIEDWPSRNGRFYYS) the chain is on the extracellular side. Residues 263 to 283 (IFSLCVQYLVPILIVSVAYFG) form a helical membrane-spanning segment. At 284 to 317 (IYNKLKSRITVVAVQASSAQRKVERGRRMKRTNC) the chain is on the cytoplasmic side. A helical membrane pass occupies residues 318 to 338 (LLISIAIIFGVSWLPLNFFNL). At 339-355 (YADMERSPVTQSMLVRY) the chain is on the extracellular side. The helical transmembrane segment at 356–376 (AICHMIGMSSACSNPLLYGWL) threads the bilayer. Residues 377–485 (NDNFRKEFQE…PSEVTKLMPR (109 aa)) lie on the Cytoplasmic side of the membrane.

This sequence belongs to the G-protein coupled receptor 1 family. As to expression, expressed in midgut, brain lobes and ventral nerve cord of larvae. In adults, expressed in a pair of dorsolateral neurons in the protocerebrum, and the central complex and a small number of neurons in the subesophageal ganglion (at protein level). Expressed in a subset of sugar-responsive PAIN neurons in the thoracic body but is absent from other peripheral PAIN neurons.

It localises to the membrane. Receptor for NPF. Integral part of the sensory system that mediates food signaling, providing the neural basis for the regulation of food response; coordinates larval foraging and social behavior changes during development. Required in dopaminergic (DA) neurons that innervate the mushroom body for satiety to suppress appetitive memory performance; a key factor in the internal state of hunger in the brain. NPF neurons coordinately modulate diverse sensory and motor neurons important for feeding, flight, and locomotion. NPF/NPFR pathway exerts its suppressive effect on larval aversion to diverse stressful stimuli (chemical stress and noxious heat) through attenuation of TRP channel-induced neuronal excitation. NPF neural signaling system plays a physiological role in acute modulation of alcohol sensitivity in adults, rather than a general response to intoxication by sedative agents. Activation and inhibition of the NPF system reduces and enhances ethanol preference, respectively. Sexual experience, the NPF system activity and ethanol consumption are all linked; sexual deprivation is a major contributor to enhanced ethanol preference. In Drosophila melanogaster (Fruit fly), this protein is Neuropeptide F receptor.